Reading from the N-terminus, the 272-residue chain is GTP cyclohydrolase FolE2 (272 aa).

This sequence belongs to the GTP cyclohydrolase IV family.

It catalyses the reaction GTP + H2O = 7,8-dihydroneopterin 3'-triphosphate + formate + H(+). It participates in cofactor biosynthesis; 7,8-dihydroneopterin triphosphate biosynthesis; 7,8-dihydroneopterin triphosphate from GTP: step 1/1. Converts GTP to 7,8-dihydroneopterin triphosphate. This chain is GTP cyclohydrolase FolE2, found in Aromatoleum aromaticum (strain DSM 19018 / LMG 30748 / EbN1) (Azoarcus sp. (strain EbN1)).